The following is a 689-amino-acid chain: DNA topoisomerase 1 (689 aa).

A Toprim domain is found at 3 to 113 (DNLVIVESPA…KENRVVFNEI (111 aa)). Mg(2+)-binding residues include Glu9 and Asp82. Residues 129-557 (EMNLVDAQQA…FFSSFKQDVE (429 aa)) form the Topo IA-type catalytic domain. The tract at residues 163–168 (SAGRVQ) is interaction with DNA. Tyr298 acts as the O-(5'-phospho-DNA)-tyrosine intermediate in catalysis. Positions 328–357 (SKRKASGKQGDQDAHEAIRPSSTMRTPDDM) are disordered. 3 C4-type zinc fingers span residues 577 to 603 (CEVCGSPMVIKMGRYGKFMACSNFPDC), 617 to 645 (CPKCNDGDVVERKSKKNRVFYGCSKYPEC), and 658 to 681 (CPKCNQYLVENKKGKTTQVICSNC).

Belongs to the type IA topoisomerase family. Monomer. Mg(2+) is required as a cofactor.

The catalysed reaction is ATP-independent breakage of single-stranded DNA, followed by passage and rejoining.. Functionally, releases the supercoiling and torsional tension of DNA, which is introduced during the DNA replication and transcription, by transiently cleaving and rejoining one strand of the DNA duplex. Introduces a single-strand break via transesterification at a target site in duplex DNA. The scissile phosphodiester is attacked by the catalytic tyrosine of the enzyme, resulting in the formation of a DNA-(5'-phosphotyrosyl)-enzyme intermediate and the expulsion of a 3'-OH DNA strand. The free DNA strand then undergoes passage around the unbroken strand, thus removing DNA supercoils. Finally, in the religation step, the DNA 3'-OH attacks the covalent intermediate to expel the active-site tyrosine and restore the DNA phosphodiester backbone. In Staphylococcus aureus, this protein is DNA topoisomerase 1.